The primary structure comprises 300 residues: 4-hydroxy-tetrahydrodipicolinate synthase (300 aa).

Pyruvate is bound at residue T55. Residue Y143 is the Proton donor/acceptor of the active site. K171 (schiff-base intermediate with substrate) is an active-site residue. I211 lines the pyruvate pocket.

It belongs to the DapA family. In terms of assembly, homotetramer; dimer of dimers.

The protein resides in the cytoplasm. The catalysed reaction is L-aspartate 4-semialdehyde + pyruvate = (2S,4S)-4-hydroxy-2,3,4,5-tetrahydrodipicolinate + H2O + H(+). Its pathway is amino-acid biosynthesis; L-lysine biosynthesis via DAP pathway; (S)-tetrahydrodipicolinate from L-aspartate: step 3/4. Its function is as follows. Catalyzes the condensation of (S)-aspartate-beta-semialdehyde [(S)-ASA] and pyruvate to 4-hydroxy-tetrahydrodipicolinate (HTPA). The chain is 4-hydroxy-tetrahydrodipicolinate synthase from Mycobacterium bovis (strain ATCC BAA-935 / AF2122/97).